A 410-amino-acid chain; its full sequence is Eukaryotic initiation factor 4A (410 aa).

The Q motif motif lies at Glu-37–Gln-65. The Helicase ATP-binding domain maps to Ile-68–Ile-238. Ala-81 to Thr-88 is an ATP binding site. The short motif at Asp-186–Asp-189 is the DEAD box element. The region spanning Gly-249 to Leu-410 is the Helicase C-terminal domain.

This sequence belongs to the DEAD box helicase family. eIF4A subfamily. As to quaternary structure, eIF4F is a multi-subunit complex, the composition of which varies with external and internal environmental conditions. It is composed of at least EIF4A, EIF4E and EIF4G.

The catalysed reaction is ATP + H2O = ADP + phosphate + H(+). In terms of biological role, ATP-dependent RNA helicase which is a subunit of the eIF4F complex involved in cap recognition and is required for mRNA binding to ribosome. In the current model of translation initiation, eIF4A unwinds RNA secondary structures in the 5'-UTR of mRNAs which is necessary to allow efficient binding of the small ribosomal subunit, and subsequent scanning for the initiator codon. This Zea mays (Maize) protein is Eukaryotic initiation factor 4A.